We begin with the raw amino-acid sequence, 83 residues long: Apolipoprotein C-I (83 aa).

The first 26 residues, methionine 1–alanine 26, serve as a signal peptide directing secretion.

It belongs to the apolipoprotein C1 family.

Its subcellular location is the secreted. Inhibitor of lipoprotein binding to the low density lipoprotein (LDL) receptor, LDL receptor-related protein, and very low density lipoprotein (VLDL) receptor. Associates with high density lipoproteins (HDL) and the triacylglycerol-rich lipoproteins in the plasma and makes up about 10% of the protein of the VLDL and 2% of that of HDL. Appears to interfere directly with fatty acid uptake and is also the major plasma inhibitor of cholesteryl ester transfer protein (CETP). Binds free fatty acids and reduces their intracellular esterification. Modulates the interaction of APOE with beta-migrating VLDL and inhibits binding of beta-VLDL to the LDL receptor-related protein. The sequence is that of Apolipoprotein C-I (APOC1) from Rousettus aegyptiacus (Egyptian fruit bat).